A 279-amino-acid chain; its full sequence is Movement protein (279 aa).

A disordered region spans residues 246–279 (SESEELNVESPPAAIGSSSASRSEAFRPQVVNGL). A compositionally biased stretch (low complexity) spans 254 to 268 (ESPPAAIGSSSASRS).

Belongs to the cucumovirus movement protein family.

Its subcellular location is the host cell junction. The protein resides in the host plasmodesma. Functionally, transports viral genome to neighboring plant cells directly through plasmosdesmata, without any budding. The movement protein allows efficient cell to cell propagation, by bypassing the host cell wall barrier. Acts by forming a tubular structure at the host plasmodesmata, enlarging it enough to allow free passage of virion capsids. The polypeptide is Movement protein (Cucumber mosaic virus (strain CS) (CMV)).